A 683-amino-acid polypeptide reads, in one-letter code: Cytochrome P450 monooxygenase htyF (683 aa).

Residues 8–28 (PALLAASVVLAVSLVSYVIQL) form a helical membrane-spanning segment. An N-linked (GlcNAc...) asparagine glycan is attached at Asn-29. Cys-481 provides a ligand contact to heme. Asn-581 is a glycosylation site (N-linked (GlcNAc...) asparagine). The chain crosses the membrane as a helical span at residues 588 to 608 (LYVFVVLVACVAALFIGIGIY).

The protein belongs to the cytochrome P450 family. Requires heme as cofactor.

The protein resides in the membrane. It functions in the pathway antifungal biosynthesis. Functionally, cytochrome P450 monooxygenase; part of the gene cluster that mediates the de novo generation of L-homotyrosine from acetyl-CoA and 4-hydroxyphenyl-pyruvate. L-homotyrosine is a building block of echinocandin B, a fungal lipidated cyclic hexapeptide that acts as an antifungal agent. L-homotyrosine 4-hydroxyphenyl-pyruvate first undergoes an aldol-type condensation by htyA with the C-2 of acetyl-CoA followed by the release of CoA to form 2-(4-hydroxybenzyl)-malate. This is followed by isomerization of 2-(4-hydroxy-benzyl)-malate to 3-(4-hydroxybenzyl)-malate by htyD. Thereafter, 3-(4-hydroxybenzyl)-malate undergoes decarboxylation and oxidation to form 2-oxo-4-(4-hydroxybenzyl)butanoic acid, coupled to reduction of NAD(+) to NADH by htyC. The product then undergoes transamination catalyzed by htyB to form L-homotyrosine. The protein is Cytochrome P450 monooxygenase htyF of Aspergillus rugulosus (Emericella rugulosa).